We begin with the raw amino-acid sequence, 130 residues long: Small ribosomal subunit protein uS11 (130 aa).

This sequence belongs to the universal ribosomal protein uS11 family. As to quaternary structure, part of the 30S ribosomal subunit. Interacts with proteins S7 and S18. Binds to IF-3.

Its function is as follows. Located on the platform of the 30S subunit, it bridges several disparate RNA helices of the 16S rRNA. Forms part of the Shine-Dalgarno cleft in the 70S ribosome. The protein is Small ribosomal subunit protein uS11 of Xylella fastidiosa (strain 9a5c).